A 380-amino-acid polypeptide reads, in one-letter code: Histidinol-phosphate aminotransferase 1 (380 aa).

At Lys235 the chain carries N6-(pyridoxal phosphate)lysine.

This sequence belongs to the class-II pyridoxal-phosphate-dependent aminotransferase family. Histidinol-phosphate aminotransferase subfamily. Homodimer. Pyridoxal 5'-phosphate is required as a cofactor.

The enzyme catalyses L-histidinol phosphate + 2-oxoglutarate = 3-(imidazol-4-yl)-2-oxopropyl phosphate + L-glutamate. It functions in the pathway amino-acid biosynthesis; L-histidine biosynthesis; L-histidine from 5-phospho-alpha-D-ribose 1-diphosphate: step 7/9. The polypeptide is Histidinol-phosphate aminotransferase 1 (Psychrobacter arcticus (strain DSM 17307 / VKM B-2377 / 273-4)).